A 426-amino-acid chain; its full sequence is mRNA cap guanine-N(7) methyltransferase (426 aa).

An mRNA cap 0 methyltransferase domain is found at 138 to 421 (SPIIKLRNFN…FYTTFAFRKV (284 aa)). An mRNA-binding site is contributed by 147 to 148 (NN). Residues Lys-151, Ala-169, Asp-191, Asp-220, Gln-246, and Tyr-251 each contribute to the S-adenosyl-L-methionine site.

Belongs to the class I-like SAM-binding methyltransferase superfamily. mRNA cap 0 methyltransferase family.

Its subcellular location is the nucleus. It carries out the reaction a 5'-end (5'-triphosphoguanosine)-ribonucleoside in mRNA + S-adenosyl-L-methionine = a 5'-end (N(7)-methyl 5'-triphosphoguanosine)-ribonucleoside in mRNA + S-adenosyl-L-homocysteine. Its function is as follows. Responsible for methylating the 5'-cap structure of mRNAs. This chain is mRNA cap guanine-N(7) methyltransferase (ABD1), found in Kluyveromyces lactis (strain ATCC 8585 / CBS 2359 / DSM 70799 / NBRC 1267 / NRRL Y-1140 / WM37) (Yeast).